A 382-amino-acid chain; its full sequence is Lipid-A-disaccharide synthase (382 aa).

This sequence belongs to the LpxB family.

It catalyses the reaction a lipid X + a UDP-2-N,3-O-bis[(3R)-3-hydroxyacyl]-alpha-D-glucosamine = a lipid A disaccharide + UDP + H(+). It functions in the pathway bacterial outer membrane biogenesis; LPS lipid A biosynthesis. Its function is as follows. Condensation of UDP-2,3-diacylglucosamine and 2,3-diacylglucosamine-1-phosphate to form lipid A disaccharide, a precursor of lipid A, a phosphorylated glycolipid that anchors the lipopolysaccharide to the outer membrane of the cell. The sequence is that of Lipid-A-disaccharide synthase from Alteromonas mediterranea (strain DSM 17117 / CIP 110805 / LMG 28347 / Deep ecotype).